Reading from the N-terminus, the 631-residue chain is MPTTFQEIPRERPVTPLLDRADTPAGLRRLAEADLEHLADELRQELLYTVGQTGGHFGAGLGVIELTIALHYVFDTPDDRLVWDVGHQAYPHKILTGRRNRMLSLRQKDGIAAFPRRSESEYDTFGVGHSSTSISAALGMAIAARLQNSARKSIAVIGDGALTAGMAFEALNHAQEVNADMLVILNDNDMSISRNVGGLSNYLAKILSSRTYASMREGSKKVLSRLPGAWEIARRTEEYAKGMLVPGTLFEELGWNYIGPIDGHDLPTMIATLRNMRDLKGPQFLHVVTKKGKGFAPAEIDPIGYHAITKLEPADKPAAPKKASGPKYSAVFGQWLCDMAAADNRLVGITPAMKEGSDLVAFSERYPERYFDVAIAEQHAVTLAAGMACEGSKPVVAIYSTFLQRAYDQLIHDVAVQNLDVLFAIDRAGLVGEDGPTHAGSYDLSYLRCIPGMLVMTPSDENELRKMLSTGHLYNGPAAVRYPRGTGPNAPISGDLEPLEIGKGVIRRQGEKVALLVFGVQLAEALQVAEQINATVVDMRFVKPLDEALVLELAGSHALLVTLEENAIMGGAGAAVGEFLASQAVIKPLLHLGLPDIYVEHAKPAQMLAECGLDAAGIEASVKARMAKLGL.

Residues His87 and 128–130 contribute to the thiamine diphosphate site; that span reads GHS. Asp159 serves as a coordination point for Mg(2+). Thiamine diphosphate-binding positions include 160 to 161, Asn188, Phe295, and Glu377; that span reads GA. Position 188 (Asn188) interacts with Mg(2+).

Belongs to the transketolase family. DXPS subfamily. Homodimer. Mg(2+) is required as a cofactor. Requires thiamine diphosphate as cofactor.

The enzyme catalyses D-glyceraldehyde 3-phosphate + pyruvate + H(+) = 1-deoxy-D-xylulose 5-phosphate + CO2. The protein operates within metabolic intermediate biosynthesis; 1-deoxy-D-xylulose 5-phosphate biosynthesis; 1-deoxy-D-xylulose 5-phosphate from D-glyceraldehyde 3-phosphate and pyruvate: step 1/1. Functionally, catalyzes the acyloin condensation reaction between C atoms 2 and 3 of pyruvate and glyceraldehyde 3-phosphate to yield 1-deoxy-D-xylulose-5-phosphate (DXP). The sequence is that of 1-deoxy-D-xylulose-5-phosphate synthase from Pseudomonas putida (strain W619).